A 532-amino-acid polypeptide reads, in one-letter code: Apolipoprotein N-acyltransferase (532 aa).

The next 6 membrane-spanning stretches (helical) occupy residues Ile-37–Ala-57, Trp-75–Val-95, Leu-106–Ala-126, Leu-128–Glu-148, Val-179–Leu-199, and Thr-207–Leu-227. The 250-residue stretch at Val-245–Ser-494 folds into the CN hydrolase domain. Glu-289 acts as the Proton acceptor in catalysis. Residue Lys-353 is part of the active site. Cys-406 acts as the Nucleophile in catalysis. A helical transmembrane segment spans residues Gly-505–Leu-525.

The protein belongs to the CN hydrolase family. Apolipoprotein N-acyltransferase subfamily.

Its subcellular location is the cell inner membrane. It carries out the reaction N-terminal S-1,2-diacyl-sn-glyceryl-L-cysteinyl-[lipoprotein] + a glycerophospholipid = N-acyl-S-1,2-diacyl-sn-glyceryl-L-cysteinyl-[lipoprotein] + a 2-acyl-sn-glycero-3-phospholipid + H(+). Its pathway is protein modification; lipoprotein biosynthesis (N-acyl transfer). Catalyzes the phospholipid dependent N-acylation of the N-terminal cysteine of apolipoprotein, the last step in lipoprotein maturation. The protein is Apolipoprotein N-acyltransferase of Brucella melitensis biotype 1 (strain ATCC 23456 / CCUG 17765 / NCTC 10094 / 16M).